The primary structure comprises 93 residues: Acylphosphatase (93 aa).

Residues 6-93 (RLVAWVRGQV…RGGYEGFAIR (88 aa)) enclose the Acylphosphatase-like domain. Catalysis depends on residues Arg21 and Asn40.

Belongs to the acylphosphatase family.

The enzyme catalyses an acyl phosphate + H2O = a carboxylate + phosphate + H(+). The polypeptide is Acylphosphatase (acyP) (Streptomyces coelicolor (strain ATCC BAA-471 / A3(2) / M145)).